The chain runs to 214 residues: Cdc42 effector protein 2 (214 aa).

Ser-2 is subject to N-acetylserine. One can recognise a CRIB domain in the interval 30–44 (ISPPLGDFRHTIHIG). 5 positions are modified to phosphoserine: Ser-31, Ser-101, Ser-137, Ser-141, and Ser-145. The disordered stretch occupies residues 119 to 177 (LTLPTAQAPPKPPRLHLESPQPSPQPSPQGAGNVDVWRIPEAGSPHNGMSPEPEAEEPF).

It belongs to the BORG/CEP family. In terms of assembly, interacts with CDC42 and RHOQ in a GTP-dependent manner, and with SEPT7.

The protein resides in the endomembrane system. It localises to the cytoplasm. Its subcellular location is the cytoskeleton. Probably involved in the organization of the actin cytoskeleton. May act downstream of CDC42 to induce actin filament assembly leading to cell shape changes. Induces pseudopodia formation in fibroblasts in a CDC42-dependent manner. This Mus musculus (Mouse) protein is Cdc42 effector protein 2 (Cdc42ep2).